The following is a 494-amino-acid chain: Arp2/3 complex-activating protein rickA (494 aa).

The interval P312–R494 is disordered. Residues I317–A357 are compositionally biased toward pro residues. One can recognise a WH2 domain in the interval D383–V400. Positions V421 to D454 are central and acidic domains. The span at S440–S456 shows a compositional bias: low complexity. Over residues T477–R494 the composition is skewed to polar residues.

The protein localises to the cell surface. Its function is as follows. Recruits and activates the Arp2/3 complex, which in turn leads to actin polymerization, promoting Rickettsia motility during infection. In Rickettsia rickettsii, this protein is Arp2/3 complex-activating protein rickA (rickA).